The primary structure comprises 308 residues: Peroxisomal targeting signal 2 receptor (308 aa).

WD repeat units lie at residues 57 to 88, 101 to 132, 145 to 176, 187 to 218, 231 to 262, and 274 to 306; these read DVED…RLFD, EHKA…KLWL, GSNS…KFWD, EIPN…YCYD, GHQL…RIFD, and LHSE…YIWN.

Belongs to the WD repeat peroxin-7 family. As to quaternary structure, interacts with PEX21.

It is found in the cytoplasm. It localises to the cytosol. Its subcellular location is the peroxisome matrix. Its function is as follows. Receptor required for the peroxisomal import of proteins containing a C-terminal PTS2-type peroxisomal targeting signal, such as 3-oxoacyl-CoA thiolase. Specifically binds to cargo proteins containing a PTS2 peroxisomal targeting signal in the cytosol. Cargo protein-binding triggers interaction with PEX21 and formation of a ternary complex composed of PEX21 and PEX7 along with PTS2-containing cargo proteins, which is tranlocated into peroxisomes by passing through the PEX13-PEX14 docking complex. The polypeptide is Peroxisomal targeting signal 2 receptor (pex7) (Schizosaccharomyces pombe (strain 972 / ATCC 24843) (Fission yeast)).